Reading from the N-terminus, the 265-residue chain is Thymidine kinase 2, mitochondrial (265 aa).

The transit peptide at 1 to 33 (MLLWPLRGWAARALRCFGPGSRGSPASGPGPRR) directs the protein to the mitochondrion. Positions 20 to 32 (GSRGSPASGPGPR) are enriched in low complexity. The interval 20 to 47 (GSRGSPASGPGPRRVQRRAWPPDKEQEK) is disordered. 57–65 (GNIASGKTT) contributes to the ATP binding site. The active-site Proton acceptor is the Glu133.

This sequence belongs to the DCK/DGK family. Monomer. In terms of tissue distribution, predominantly expressed in liver, pancreas, muscle, and brain.

It localises to the mitochondrion. It catalyses the reaction thymidine + ATP = dTMP + ADP + H(+). The enzyme catalyses 2'-deoxycytidine + ATP = dCMP + ADP + H(+). It carries out the reaction 2'-deoxyuridine + ATP = dUMP + ADP + H(+). Phosphorylates thymidine, deoxycytidine, and deoxyuridine in the mitochondrial matrix. In non-replicating cells, where cytosolic dNTP synthesis is down-regulated, mtDNA synthesis depends solely on TK2 and DGUOK. Widely used as target of antiviral and chemotherapeutic agents. This chain is Thymidine kinase 2, mitochondrial, found in Homo sapiens (Human).